The primary structure comprises 184 residues: MLTMKDVIREGDPILRNVAEEVSLPASEEDTTTLKEMIEFVINSQDPEMAEKYSLRPGIGLAAPQIGVSKKMIAVHVTDADGTLYSHALFNPKIISHSVERTYLQGGEGCLSVDREVPGYVPRYTRITVKATSINGEEVKLRLKGLPAIVFQHEIDHLNGVMFYDHINKENPFAAPDDSKPLER.

Positions 110 and 153 each coordinate Fe cation. The active site involves Glu-154. Residue His-157 participates in Fe cation binding.

It belongs to the polypeptide deformylase family. Requires Fe(2+) as cofactor.

It carries out the reaction N-terminal N-formyl-L-methionyl-[peptide] + H2O = N-terminal L-methionyl-[peptide] + formate. Removes the formyl group from the N-terminal Met of newly synthesized proteins. Requires at least a dipeptide for an efficient rate of reaction. N-terminal L-methionine is a prerequisite for activity but the enzyme has broad specificity at other positions. The protein is Peptide deformylase 2 of Bacillus cereus (strain ATCC 14579 / DSM 31 / CCUG 7414 / JCM 2152 / NBRC 15305 / NCIMB 9373 / NCTC 2599 / NRRL B-3711).